We begin with the raw amino-acid sequence, 494 residues long: UPF0371 protein M6_Spy1067 (494 aa).

It belongs to the UPF0371 family.

The protein is UPF0371 protein M6_Spy1067 of Streptococcus pyogenes serotype M6 (strain ATCC BAA-946 / MGAS10394).